The chain runs to 108 residues: Nucleoid-associated protein PSHAa1202 (108 aa).

Disordered regions lie at residues 1-20 and 87-108; these read MFKG…QDRM and TQER…KMPF.

It belongs to the YbaB/EbfC family. Homodimer.

Its subcellular location is the cytoplasm. The protein resides in the nucleoid. Binds to DNA and alters its conformation. May be involved in regulation of gene expression, nucleoid organization and DNA protection. This Pseudoalteromonas translucida (strain TAC 125) protein is Nucleoid-associated protein PSHAa1202.